The chain runs to 393 residues: Succinate--CoA ligase [ADP-forming] subunit beta (393 aa).

The 237-residue stretch at 9–245 folds into the ATP-grasp domain; the sequence is KMLFAQYGIP…PSQEDKCETY (237 aa). Residues lysine 46, 53 to 55, glutamate 99, isoleucine 102, and glutamate 107 contribute to the ATP site; that span reads GRG. The Mg(2+) site is built by asparagine 200 and aspartate 214. Substrate is bound by residues asparagine 265 and 322–324; that span reads GIV.

Belongs to the succinate/malate CoA ligase beta subunit family. In terms of assembly, heterotetramer of two alpha and two beta subunits. Mg(2+) is required as a cofactor.

It catalyses the reaction succinate + ATP + CoA = succinyl-CoA + ADP + phosphate. It carries out the reaction GTP + succinate + CoA = succinyl-CoA + GDP + phosphate. It participates in carbohydrate metabolism; tricarboxylic acid cycle; succinate from succinyl-CoA (ligase route): step 1/1. Functionally, succinyl-CoA synthetase functions in the citric acid cycle (TCA), coupling the hydrolysis of succinyl-CoA to the synthesis of either ATP or GTP and thus represents the only step of substrate-level phosphorylation in the TCA. The beta subunit provides nucleotide specificity of the enzyme and binds the substrate succinate, while the binding sites for coenzyme A and phosphate are found in the alpha subunit. This chain is Succinate--CoA ligase [ADP-forming] subunit beta, found in Baumannia cicadellinicola subsp. Homalodisca coagulata.